The chain runs to 291 residues: Small ribosomal subunit biogenesis GTPase RsgA (291 aa).

The CP-type G domain maps to 63 to 221 (KNELKRPPVS…IADTPGFSAL (159 aa)). GTP-binding positions include 112–115 (TKKD) and 164–172 (GQSGVGKST). C245, C250, H252, and C258 together coordinate Zn(2+).

It belongs to the TRAFAC class YlqF/YawG GTPase family. RsgA subfamily. In terms of assembly, monomer. Associates with 30S ribosomal subunit, binds 16S rRNA. The cofactor is Zn(2+).

The protein localises to the cytoplasm. Functionally, one of several proteins that assist in the late maturation steps of the functional core of the 30S ribosomal subunit. Helps release RbfA from mature subunits. May play a role in the assembly of ribosomal proteins into the subunit. Circularly permuted GTPase that catalyzes slow GTP hydrolysis, GTPase activity is stimulated by the 30S ribosomal subunit. This chain is Small ribosomal subunit biogenesis GTPase RsgA, found in Staphylococcus aureus (strain Mu50 / ATCC 700699).